A 223-amino-acid chain; its full sequence is MEKTMSLGLVGRKVGMTRIFTAEGDSIPVTVLDVSDNRVTQIKTVETDGYTAVQVAFGSRRASRVTKPLAGHLAKAGVEAGEILKEFRIEADKAAELSNGAVIGPDLFEVGQKVDVQGVSIGKGYAGTIKRYNFGSGRASHGNSRSHNVPGSIGMAQDPGRVFPGKRMTGHMGDETVTVQNLEIARIDADRKLLLVKGAVPGAKGGKVFVTPAVKTRAVKGAK.

The segment at 137-157 (GRASHGNSRSHNVPGSIGMAQ) is disordered. Glutamine 157 is modified (N5-methylglutamine).

Belongs to the universal ribosomal protein uL3 family. Part of the 50S ribosomal subunit. Forms a cluster with proteins L14 and L19. Post-translationally, methylated by PrmB.

One of the primary rRNA binding proteins, it binds directly near the 3'-end of the 23S rRNA, where it nucleates assembly of the 50S subunit. The sequence is that of Large ribosomal subunit protein uL3 from Burkholderia pseudomallei (strain 1106a).